Here is a 429-residue protein sequence, read N- to C-terminus: Neuronal pentraxin-2 (429 aa).

Positions 1–14 (MLALLTVGVALAVA) are cleaved as a signal peptide. N-linked (GlcNAc...) asparagine glycans are attached at residues Asn146 and Asn187. Residues 221–422 (DAFKVSLPLR…GASKWPVETC (202 aa)) enclose the Pentraxin (PTX) domain. Cysteines 251 and 311 form a disulfide. Positions 275, 353, 354, 355, and 365 each coordinate Ca(2+). Asn391 is a glycosylation site (N-linked (GlcNAc...) asparagine).

As to quaternary structure, homooligomer or heterooligomer (probably pentamer) with neuronal pentraxin receptor (NPTXR). It depends on Ca(2+) as a cofactor.

It is found in the secreted. Its function is as follows. Likely to play role in the modification of cellular properties that underlie long-term plasticity. Binds to agar matrix in a calcium-dependent manner. This chain is Neuronal pentraxin-2 (Nptx2), found in Mus musculus (Mouse).